A 156-amino-acid polypeptide reads, in one-letter code: SCP2 sterol-binding domain-containing protein 1 (156 aa).

The region spanning 44–156 is the SCP2 domain; sequence SFPVFQDIRL…ERVFKDWAKF (113 aa).

This is SCP2 sterol-binding domain-containing protein 1 (SCP2D1) from Homo sapiens (Human).